A 201-amino-acid chain; its full sequence is MAGPQRRGSGAGGGERRDRKGRDGGAAAAEKTAYVERVVAINRVAKVVKGGRRFSFTALVVVGDGDGTVGVGYGKAKEVPAAIAKGVEEAKKHFFKVPRIQGTIPHPITGEKAAGVVLLKPASPGTGVIAGGPVRAVLECAGVHDILSKSLGSSNAINIVHATVAALKGLQRPEEIAARRGLPLEDVAPAALLRARAGAGA.

Residues 1-27 are disordered; that stretch reads MAGPQRRGSGAGGGERRDRKGRDGGAA. A compositionally biased stretch (basic and acidic residues) spans 14–23; it reads GERRDRKGRD. The 64-residue stretch at 34-97 folds into the S5 DRBM domain; that stretch reads YVERVVAINR…EEAKKHFFKV (64 aa).

The protein belongs to the universal ribosomal protein uS5 family. In terms of assembly, part of the 30S ribosomal subunit. Contacts proteins S4 and S8.

With S4 and S12 plays an important role in translational accuracy. Functionally, located at the back of the 30S subunit body where it stabilizes the conformation of the head with respect to the body. The polypeptide is Small ribosomal subunit protein uS5 (Streptomyces avermitilis (strain ATCC 31267 / DSM 46492 / JCM 5070 / NBRC 14893 / NCIMB 12804 / NRRL 8165 / MA-4680)).